The following is a 337-amino-acid chain: Eukaryotic translation initiation factor 3 subunit H (337 aa).

Residues 21-153 (VQCDGLAVMK…LKAYRLTPQA (133 aa)) form the MPN domain.

It belongs to the eIF-3 subunit H family. In terms of assembly, component of the eukaryotic translation initiation factor 3 (eIF-3) complex. The eIF-3 complex interacts with pix. Interacts with mxt.

The protein localises to the cytoplasm. In terms of biological role, component of the eukaryotic translation initiation factor 3 (eIF-3) complex, which is involved in protein synthesis of a specialized repertoire of mRNAs and, together with other initiation factors, stimulates binding of mRNA and methionyl-tRNAi to the 40S ribosome. The eIF-3 complex specifically targets and initiates translation of a subset of mRNAs involved in cell proliferation. In Drosophila grimshawi (Hawaiian fruit fly), this protein is Eukaryotic translation initiation factor 3 subunit H.